We begin with the raw amino-acid sequence, 388 residues long: Probable RNA-binding protein sce3 (388 aa).

Residues 18–84 (ESFGSTNWAD…GGMGSGYQRD (67 aa)) are disordered. Over residues 38–50 (DRTTSTYRATPSS) the composition is skewed to polar residues. A phosphoserine mark is found at S49, S50, and S60. T61 is subject to Phosphothreonine. Phosphoserine is present on residues S64, S67, and S71. An RRM domain is found at 94–169 (FTAHVGNLSF…RPVRITVAEP (76 aa)). The span at 171–185 (RSFAREERSTGDWVR) shows a compositional bias: basic and acidic residues. The disordered stretch occupies residues 171-388 (RSFAREERST…WTKIGKGRKH (218 aa)). S197 is modified (phosphoserine). A compositionally biased stretch (basic and acidic residues) spans 208–229 (RFRDPARDPSDRVREEPREWVR). The segment covering 248 to 257 (PRSSSNVNTE) has biased composition (polar residues). 3 positions are modified to phosphoserine: S250, S251, and S252. A compositionally biased stretch (low complexity) spans 258 to 268 (ATPSATTTTSS). A compositionally biased stretch (basic and acidic residues) spans 289-349 (RVEEKLAKRT…LGDGEKKSSE (61 aa)). Residue S347 is modified to Phosphoserine.

The protein localises to the cytoplasm. This chain is Probable RNA-binding protein sce3 (sce3), found in Schizosaccharomyces pombe (strain 972 / ATCC 24843) (Fission yeast).